A 200-amino-acid chain; its full sequence is ATP-dependent Clp protease proteolytic subunit 1 (200 aa).

Serine 102 (nucleophile) is an active-site residue. Histidine 127 is a catalytic residue.

This sequence belongs to the peptidase S14 family. In terms of assembly, fourteen ClpP subunits assemble into 2 heptameric rings which stack back to back to give a disk-like structure with a central cavity, resembling the structure of eukaryotic proteasomes.

The protein localises to the cytoplasm. It catalyses the reaction Hydrolysis of proteins to small peptides in the presence of ATP and magnesium. alpha-casein is the usual test substrate. In the absence of ATP, only oligopeptides shorter than five residues are hydrolyzed (such as succinyl-Leu-Tyr-|-NHMec, and Leu-Tyr-Leu-|-Tyr-Trp, in which cleavage of the -Tyr-|-Leu- and -Tyr-|-Trp bonds also occurs).. Its function is as follows. Cleaves peptides in various proteins in a process that requires ATP hydrolysis. Has a chymotrypsin-like activity. Plays a major role in the degradation of misfolded proteins. The protein is ATP-dependent Clp protease proteolytic subunit 1 of Bradyrhizobium diazoefficiens (strain JCM 10833 / BCRC 13528 / IAM 13628 / NBRC 14792 / USDA 110).